We begin with the raw amino-acid sequence, 135 residues long: Ribonuclease P protein component (135 aa).

The protein belongs to the RnpA family. As to quaternary structure, consists of a catalytic RNA component (M1 or rnpB) and a protein subunit.

The enzyme catalyses Endonucleolytic cleavage of RNA, removing 5'-extranucleotides from tRNA precursor.. RNaseP catalyzes the removal of the 5'-leader sequence from pre-tRNA to produce the mature 5'-terminus. It can also cleave other RNA substrates such as 4.5S RNA. The protein component plays an auxiliary but essential role in vivo by binding to the 5'-leader sequence and broadening the substrate specificity of the ribozyme. This is Ribonuclease P protein component from Saccharophagus degradans (strain 2-40 / ATCC 43961 / DSM 17024).